A 118-amino-acid chain; its full sequence is MFKNMMENMNNKKIAMIIIIFYVITSMVQGNYHFAILGAYFIIKNIFEYKFNKGIELPSINYTIIGTIIGQYTVLIIMIFCRDNFSDNPYIEQILTTNLSIVGYAFGSFWYRCITTQN.

3 helical membrane passes run I17–L37, I60–F80, and Y90–W110.

Its subcellular location is the membrane. This is an uncharacterized protein from Acanthamoeba polyphaga mimivirus (APMV).